Here is a 312-residue protein sequence, read N- to C-terminus: tRNA dimethylallyltransferase (312 aa).

13 to 20 (GPTAVGKT) provides a ligand contact to ATP. Substrate is bound at residue 15 to 20 (TAVGKT). Interaction with substrate tRNA regions lie at residues 38–41 (DSVQ) and 163–167 (QRVVR).

The protein belongs to the IPP transferase family. Monomer. Mg(2+) serves as cofactor.

The enzyme catalyses adenosine(37) in tRNA + dimethylallyl diphosphate = N(6)-dimethylallyladenosine(37) in tRNA + diphosphate. Catalyzes the transfer of a dimethylallyl group onto the adenine at position 37 in tRNAs that read codons beginning with uridine, leading to the formation of N6-(dimethylallyl)adenosine (i(6)A). The polypeptide is tRNA dimethylallyltransferase (Exiguobacterium sibiricum (strain DSM 17290 / CCUG 55495 / CIP 109462 / JCM 13490 / 255-15)).